A 226-amino-acid chain; its full sequence is Ribonuclease 3 (226 aa).

One can recognise an RNase III domain in the interval 6 to 128 (INRLQRKLGY…LIGGVFLDSD (123 aa)). Glu41 lines the Mg(2+) pocket. Asp45 is a catalytic residue. Mg(2+)-binding residues include Asp114 and Glu117. Glu117 is an active-site residue. Residues 155–225 (DPKTRLQEYL…AEQALKKLEL (71 aa)) form the DRBM domain.

It belongs to the ribonuclease III family. As to quaternary structure, homodimer. Mg(2+) serves as cofactor.

It is found in the cytoplasm. It catalyses the reaction Endonucleolytic cleavage to 5'-phosphomonoester.. Digests double-stranded RNA. Involved in the processing of primary rRNA transcript to yield the immediate precursors to the large and small rRNAs (23S and 16S). Processes some mRNAs, and tRNAs when they are encoded in the rRNA operon. Processes pre-crRNA and tracrRNA of type II CRISPR loci if present in the organism. The chain is Ribonuclease 3 from Klebsiella pneumoniae (strain 342).